Consider the following 342-residue polypeptide: Holliday junction branch migration complex subunit RuvB (342 aa).

The large ATPase domain (RuvB-L) stretch occupies residues 1 to 179; that stretch reads MTNILSPEKS…FGIPMRLNFY (179 aa). ATP is bound by residues isoleucine 18, arginine 19, glycine 60, lysine 63, threonine 64, threonine 65, 126–128, arginine 169, tyrosine 179, and arginine 216; that span reads EDF. Threonine 64 contributes to the Mg(2+) binding site. The tract at residues 180–250 is small ATPAse domain (RuvB-S); sequence NTEELKKVLN…VSDFGLNRLE (71 aa). The segment at 253 to 342 is head domain (RuvB-H); sequence RIGLDSNDYR…HQFNIFNENE (90 aa). The DNA site is built by arginine 289, arginine 308, and arginine 313.

Belongs to the RuvB family. As to quaternary structure, homohexamer. Forms an RuvA(8)-RuvB(12)-Holliday junction (HJ) complex. HJ DNA is sandwiched between 2 RuvA tetramers; dsDNA enters through RuvA and exits via RuvB. An RuvB hexamer assembles on each DNA strand where it exits the tetramer. Each RuvB hexamer is contacted by two RuvA subunits (via domain III) on 2 adjacent RuvB subunits; this complex drives branch migration. In the full resolvosome a probable DNA-RuvA(4)-RuvB(12)-RuvC(2) complex forms which resolves the HJ.

It localises to the cytoplasm. It catalyses the reaction ATP + H2O = ADP + phosphate + H(+). Its function is as follows. The RuvA-RuvB-RuvC complex processes Holliday junction (HJ) DNA during genetic recombination and DNA repair, while the RuvA-RuvB complex plays an important role in the rescue of blocked DNA replication forks via replication fork reversal (RFR). RuvA specifically binds to HJ cruciform DNA, conferring on it an open structure. The RuvB hexamer acts as an ATP-dependent pump, pulling dsDNA into and through the RuvAB complex. RuvB forms 2 homohexamers on either side of HJ DNA bound by 1 or 2 RuvA tetramers; 4 subunits per hexamer contact DNA at a time. Coordinated motions by a converter formed by DNA-disengaged RuvB subunits stimulates ATP hydrolysis and nucleotide exchange. Immobilization of the converter enables RuvB to convert the ATP-contained energy into a lever motion, pulling 2 nucleotides of DNA out of the RuvA tetramer per ATP hydrolyzed, thus driving DNA branch migration. The RuvB motors rotate together with the DNA substrate, which together with the progressing nucleotide cycle form the mechanistic basis for DNA recombination by continuous HJ branch migration. Branch migration allows RuvC to scan DNA until it finds its consensus sequence, where it cleaves and resolves cruciform DNA. The sequence is that of Holliday junction branch migration complex subunit RuvB from Rickettsia rickettsii (strain Sheila Smith).